The primary structure comprises 237 residues: B3 domain-containing protein Os03g0184500 (237 aa).

The TF-B3 DNA-binding region spans 137–228 (FVKPMLHSHV…TFKVHIIRAT (92 aa)).

The protein resides in the nucleus. This is B3 domain-containing protein Os03g0184500 from Oryza sativa subsp. japonica (Rice).